Consider the following 304-residue polypeptide: Pseudouridine-5'-phosphate glycosidase (304 aa).

Glu25 serves as the catalytic Proton donor. Substrate contacts are provided by Lys88 and Val108. Asp140 lines the Mn(2+) pocket. 142 to 144 (SAD) contacts substrate. The active-site Nucleophile is Lys161.

The protein belongs to the pseudouridine-5'-phosphate glycosidase family. As to quaternary structure, homotrimer. The cofactor is Mn(2+).

The catalysed reaction is D-ribose 5-phosphate + uracil = psi-UMP + H2O. In terms of biological role, catalyzes the reversible cleavage of pseudouridine 5'-phosphate (PsiMP) to ribose 5-phosphate and uracil. Functions biologically in the cleavage direction, as part of a pseudouridine degradation pathway. In Paracoccus denitrificans (strain Pd 1222), this protein is Pseudouridine-5'-phosphate glycosidase.